We begin with the raw amino-acid sequence, 181 residues long: Protein GrpE (181 aa).

It belongs to the GrpE family. Homodimer.

It is found in the cytoplasm. Participates actively in the response to hyperosmotic and heat shock by preventing the aggregation of stress-denatured proteins, in association with DnaK and GrpE. It is the nucleotide exchange factor for DnaK and may function as a thermosensor. Unfolded proteins bind initially to DnaJ; upon interaction with the DnaJ-bound protein, DnaK hydrolyzes its bound ATP, resulting in the formation of a stable complex. GrpE releases ADP from DnaK; ATP binding to DnaK triggers the release of the substrate protein, thus completing the reaction cycle. Several rounds of ATP-dependent interactions between DnaJ, DnaK and GrpE are required for fully efficient folding. The polypeptide is Protein GrpE (Verminephrobacter eiseniae (strain EF01-2)).